Here is a 464-residue protein sequence, read N- to C-terminus: MYICLLTLVLIHAAAAFVAQNATGILAGKDHCVCEVLLPDSSFPAKRVGALEDETIRLSNRVEDEMQKLEEQDIILDTYSEKIINLTRRVEYLEKLHPESLVEISFEVLKREIRELEMYISAMRVKPNGNSVQVETLYNEVKNMSKTVGQLETLDKNNVLQAKREIVNLKKRLVDCEKNLKAKPSLMVPLGSCQHQGLAHISKPNLMQLNWKGNAYKSGAWGKDAAWNTTKKSLYWVAPLNTDGRVLESIRIYPSMSDLQMYKNPIDLPLSMLIKNKLNNTFAGQGAGVVVHNNNLYYNCFNSHDMCRASLTSGVYQKKPLLNALFNNRFSYAGTMFQDMDFSSDEKGLWVIFTTEKSAGKIVVGKVNVATFTVDNIWITTQNKSDASNAFMICGVLYVTRSLGPKMEEVFYMFDTKTGKEGHLSIMMEKMAEKVHSLSYNSNDRKLYMFSEGYLLHYDIALKP.

The signal sequence occupies residues 1 to 16; that stretch reads MYICLLTLVLIHAAAA. N-linked (GlcNAc...) asparagine glycans are attached at residues N21, N85, N143, N228, N279, and N383. The Olfactomedin-like domain maps to 192 to 464; it reads SCQHQGLAHI…LLHYDIALKP (273 aa). An intrachain disulfide couples C193 to C394.

In terms of assembly, oligomer; disulfide-linked. Post-translationally, most, if not all, of the six potential sites for N-glycosylation carry carbohydrate moieties of 8-10 sugar residues. In terms of tissue distribution, expressed exclusively in olfactory neuroepithelium.

Its subcellular location is the secreted. The protein localises to the extracellular space. Its function is as follows. May influence the maintenance, growth, or differentiation of chemosensory cilia on the apical dendrites of olfactory neurons. Major component of the extracellular matrix of the olfactory neuroepithelium. The chain is Olfactomedin from Aquarana catesbeiana (American bullfrog).